Reading from the N-terminus, the 263-residue chain is Trem-like transcript 4 protein (263 aa).

Positions 1–28 (MAWRYSQLLLVPVQLVFLASVCCPGVWG) are cleaved as a signal peptide. The region spanning 29 to 132 (STVSEELHRM…LREVTVLRNI (104 aa)) is the Ig-like V-type domain. The Extracellular portion of the chain corresponds to 29–200 (STVSEELHRM…GWTSPGLLVS (172 aa)). Cys-47 and Cys-116 are oxidised to a cystine. Residue Asn-100 is glycosylated (N-linked (GlcNAc...) asparagine). Residues 168-191 (SPEETTDSSINGTGHRNQSSSSPG) form a disordered region. The helical transmembrane segment at 201–221 (VQYGLLLLKALMLSVFCVLLC) threads the bilayer. Residues 222–263 (WRSGQGREYMAETMELSKLPHISKSLDTVSHISGYEKKANWY) are Cytoplasmic-facing.

As to quaternary structure, interacts with TYROBP/DAP12. As to expression, predominantly expressed in spleen, with highest levels on selected populations of macrophages, including red pulp macrophages, and on subsets of dendritic cells (DC), mostly on CD8alpha(+) DC (at protein level). Also expressed on blood and spleen Ly6C(low) monocytes (at protein level). Not expressed on lymphocytes or granulocytes (at protein level).

The protein resides in the cell membrane. Functionally, positively regulates Toll-like receptor signaling via TLR7, TLR9 and TLR13 in neutrophils and splenic macrophages. Regulates TLR7 signaling by controlling ligand-induced recruitment of TLR7 from the endoplasmic reticulum to endosomes and lysosomes. Positively regulates Toll-like receptor TLR9-induced production of inflammatory cytokines but is dispensable for IFNB1 production. Involved in the anti-viral response to several viruses including influenza virus, vesicular stomatitis virus and cytomegalovirus. Binds to late apoptotic, and necrotic cells, but not living or early apoptotic cells, but is not essential for uptake of dying cells by dendritic cells (DCs). Does not bind nucleic acids. May participate in antigen presentation. This chain is Trem-like transcript 4 protein (Treml4), found in Mus musculus (Mouse).